Here is a 94-residue protein sequence, read N- to C-terminus: MSKNNTSETITRKPMERASKKVFFRRRKGCPLSVPNAPVIDYKNPELLIKFVSEGGRMLPSRITNVCAKKQRKLNNAIKIARILALLPFVFQAK.

It belongs to the bacterial ribosomal protein bS18 family. In terms of assembly, part of the 30S ribosomal subunit. Forms a tight heterodimer with protein bS6.

Its function is as follows. Binds as a heterodimer with protein bS6 to the central domain of the 16S rRNA, where it helps stabilize the platform of the 30S subunit. The sequence is that of Small ribosomal subunit protein bS18 from Rickettsia bellii (strain OSU 85-389).